The sequence spans 849 residues: MTKEKLSPGMQQYLDIKKDYPDAFLLFRMGDFYELFYDDAIKAAQILEISLTSRNKNADNPIPMAGVPYHSAQQYIDVLIDLGYKVAIAEQMEDPKKAVGVVKREVVQVITPGTVVDSTKPDSANNFLVSLDTDGSQFGLSYMDLSTGEFYATTLADLPAVRSEVLNLKTRELVIGFELSENEDQLFRKQMNLLLSFEKTVYDDVHLLDDQLKAIELAAAGKLLQYVHNTQKRELSHLQKLVHYEIKDYLQMAYATKSSLDLLENARSGKKHGSLYWLLDETKTAMGTRLLRTWIDRPLVSSSLISKRQDIIQTFLDHFFERSDLSDSLKGVYDIERLASRVSFGKANPKDLLQLGQTLSQVPVIKTILESFASSSLESLINQIDTLPELEALIRSAIDSNAPITITEGGMIREGFDETLDKYRTVMREGTSWIADIETKERQKSGISTLKIDYNKKDGYYFHVTNSNLSLVPDYFFRKATLKNSERFGTAELAKIEGEMLEAREESANLEYDIFMRIRSQVESYIERLQNLAKSLATVDVLQSLAVVAENNHYVRPSFNHQQEISIENGRHAVVEKVMGSQEYIPNTINFDQKTSIQLITGPNMSGKSTYMRQLALTVIMAQLGSFVAADSADLPIFDAIFTRIGAADDLISGQSTFMVEMMEANHAIKAATPNSLILFDELGRGTATYDGMALAQAIIEYIHNKVGAKTLFATHYHELTDLSTRLTSLVNVHVATLEKDGEVTFLHKIADGPADKSYGIHVAKIAGLPKDLLNRADHILVDLEKMSAAVSVNLKNETKESQPVEEQLSLFAIDNNYEELIKKLKQLDLTNLTPRESMNALFDLKELL.

Glycine 602–serine 609 serves as a coordination point for ATP.

This sequence belongs to the DNA mismatch repair MutS family.

This protein is involved in the repair of mismatches in DNA. It is possible that it carries out the mismatch recognition step. This protein has a weak ATPase activity. This Streptococcus mutans serotype c (strain ATCC 700610 / UA159) protein is DNA mismatch repair protein MutS.